The following is a 48-amino-acid chain: Piguamerin (48 aa).

5 disulfides stabilise this stretch: cysteine 3-cysteine 14, cysteine 8-cysteine 19, cysteine 21-cysteine 41, cysteine 26-cysteine 45, and cysteine 30-cysteine 47. The Antistasin-like domain maps to 19-47; it reads CVCVIGQCRKYCPNGFKKDENGCTFPCTC.

It belongs to the protease inhibitor I15 (antistasin) family.

Its subcellular location is the secreted. In terms of biological role, inhibits plasma and tissue kallikrein, and trypsin. May be involved in leech hematophagia. The polypeptide is Piguamerin (Hirudo nipponia (Korean blood-sucking leech)).